The chain runs to 648 residues: Replication restart protein PriA (648 aa).

Residues 131–297 (TILNESNKPT…EIGKYQLVTL (167 aa)) enclose the Helicase ATP-binding domain. 144 to 151 (GVTGSGKT) lines the ATP pocket. The short motif at 240–243 (DEEH) is the DEAH box element. Positions 358, 361, 367, 370, 385, 388, 398, and 401 each coordinate Zn(2+). The region spanning 393–548 (KIFSSCPECL…SFFANELEIR (156 aa)) is the Helicase C-terminal domain.

It belongs to the helicase family. PriA subfamily. In terms of assembly, component of the replication restart primosome. Requires Zn(2+) as cofactor.

It carries out the reaction Couples ATP hydrolysis with the unwinding of duplex DNA by translocating in the 3'-5' direction.. It catalyses the reaction ATP + H2O = ADP + phosphate + H(+). In terms of biological role, initiates the restart of stalled replication forks, which reloads the replicative helicase on sites other than the origin of replication. Recognizes and binds to abandoned replication forks and remodels them to uncover a helicase loading site. Promotes assembly of the primosome at these replication forks. This chain is Replication restart protein PriA, found in Rickettsia conorii (strain ATCC VR-613 / Malish 7).